A 293-amino-acid chain; its full sequence is Exosome complex component RRP4 (293 aa).

Residues 79–159 (EVGDIVVGRI…SDGAVSLHTR (81 aa)) form the S1 motif domain. Phosphoserine is present on S124.

It belongs to the RRP4 family. In terms of assembly, component of the RNA exosome core complex (Exo-9), composed of EXOSC1, EXOSC2, EXOSC3, EXOSC4, EXOSC5, EXOSC6, EXOSC7, EXOSC8 and EXOSC9; within the complex interacts with EXOSC4 and EXOSC7. The catalytically inactive RNA exosome core complex (Exo-9) associates with the catalytic subunit EXOSC10/RRP6. Exo-9 may associate with DIS3 to form the nucleolar exosome complex, or DIS3L to form the cytoplasmic exosome complex. Exo-9 is formed by a hexameric base ring consisting of the heterodimers EXOSC4-EXOSC9, EXOSC5-EXOSC8 and EXOSC6-EXOSC7, and a cap ring consisting of EXOSC1, EXOSC2 and EXOSC3. The RNA exosome complex associates with cofactors C1D/RRP47, MPHOSPH6/MPP6 and MTREX/MTR4. Interacts with GTPBP1. Interacts with ZFP36L1 (via N-terminus).

Its subcellular location is the cytoplasm. The protein localises to the nucleus. It localises to the nucleolus. Non-catalytic component of the RNA exosome complex which has 3'-&gt;5' exoribonuclease activity and participates in a multitude of cellular RNA processing and degradation events. In the nucleus, the RNA exosome complex is involved in proper maturation of stable RNA species such as rRNA, snRNA and snoRNA, in the elimination of RNA processing by-products and non-coding 'pervasive' transcripts, such as antisense RNA species and promoter-upstream transcripts (PROMPTs), and of mRNAs with processing defects, thereby limiting or excluding their export to the cytoplasm. The RNA exosome may be involved in Ig class switch recombination (CSR) and/or Ig variable region somatic hypermutation (SHM) by targeting AICDA deamination activity to transcribed dsDNA substrates. In the cytoplasm, the RNA exosome complex is involved in general mRNA turnover and specifically degrades inherently unstable mRNAs containing AU-rich elements (AREs) within their 3' untranslated regions, and in RNA surveillance pathways, preventing translation of aberrant mRNAs. It seems to be involved in degradation of histone mRNA. The catalytic inactive RNA exosome core complex of 9 subunits (Exo-9) is proposed to play a pivotal role in the binding and presentation of RNA for ribonucleolysis, and to serve as a scaffold for the association with catalytic subunits and accessory proteins or complexes. EXOSC2 as peripheral part of the Exo-9 complex stabilizes the hexameric ring of RNase PH-domain subunits through contacts with EXOSC4 and EXOSC7. The sequence is that of Exosome complex component RRP4 (EXOSC2) from Bos taurus (Bovine).